The following is a 486-amino-acid chain: MMKQPNWLLHRAYVTPERVALIYQDKKWTFRDLADEVNELSNRLAQTSLKKGEAVGLLMNNHPQMVMLVHACFSLGFKIVLLNNKLTKAERRFQLEDVKAAALFTEPVYASDHKGELPVYTMETLPEAGQENVKKIENDFDLNQTATIMYTSGTTGRPKGVEQTFGNHFHSAVSSALNMGLREDDRWLIALPLFHISGLSALFKSVIYGMTVVLHQKFDVDEVIGSIEQHRVTMISVVQTMLSRLLSRLEECPSSLRCLLLGGGPAPLAMLQESKEKGFPVFQSYGMTETCSQIVTLAPEFSVEKLGSAGKPLFGCELKIQDGTRICRPFEHGEIMVKGANVMKGYLYREESTAAAFDQGWLKTGDIGYVDEEGFLFVLDRRSDLIISGGENIYPAEIEAVLLTHSHVKEAGVTGIDDDRWGEVPAAFLVTDHKIPENELYALCESHLAKYKWPASFHFVDELPRNASNKLQRHRLKSKGFLDDSN.

It belongs to the ATP-dependent AMP-binding enzyme family. MenE subfamily.

The catalysed reaction is 2-succinylbenzoate + ATP + CoA = 2-succinylbenzoyl-CoA + AMP + diphosphate. Its pathway is quinol/quinone metabolism; 1,4-dihydroxy-2-naphthoate biosynthesis; 1,4-dihydroxy-2-naphthoate from chorismate: step 5/7. It participates in quinol/quinone metabolism; menaquinone biosynthesis. Its function is as follows. Converts 2-succinylbenzoate (OSB) to 2-succinylbenzoyl-CoA (OSB-CoA). The chain is 2-succinylbenzoate--CoA ligase from Bacillus pumilus (strain SAFR-032).